Consider the following 92-residue polypeptide: MARSVWKGPFVDGYLLKKAEKVREGGRAEVIKIWSRRSTILPQFVGLTFGVYNGSKHIPVSVNEDMVGHKFGEFSPTRTYYGHGADKKAKRK.

Belongs to the universal ribosomal protein uS19 family.

Functionally, protein S19 forms a complex with S13 that binds strongly to the 16S ribosomal RNA. In Rhizobium etli (strain CIAT 652), this protein is Small ribosomal subunit protein uS19.